We begin with the raw amino-acid sequence, 394 residues long: N-acetylgalactosamine-6-phosphate deacetylase (394 aa).

A Zn(2+)-binding site is contributed by glutamate 137. 148 to 149 (CH) is a substrate binding site. Zn(2+)-binding residues include histidine 201 and histidine 222. Residues 225 to 226 (NG), arginine 233, and 254 to 257 (DGQH) each bind substrate. Aspartate 280 (proton donor/acceptor) is an active-site residue. 313–315 (LAG) is a binding site for substrate.

It belongs to the metallo-dependent hydrolases superfamily. NagA family.

It is found in the cytoplasm. The enzyme catalyses N-acetyl-D-galactosamine 6-phosphate + H2O = D-galactosamine 6-phosphate + acetate. It catalyses the reaction N-acetyl-D-glucosamine 6-phosphate + H2O = D-glucosamine 6-phosphate + acetate. Its function is as follows. Involved in the pathway of N-acetyl-D-galactosamine degradation. Catalyzes the conversion of N-acetyl-D-galactosamine 6-phosphate to D-galactosamine 6-phosphate and acetate. It can also catalyze the conversion of N-acetyl-D-glucosamine 6-phosphate. The chain is N-acetylgalactosamine-6-phosphate deacetylase from Shewanella sp. (strain ANA-3).